Reading from the N-terminus, the 193-residue chain is 3-isopropylmalate dehydratase small subunit (193 aa).

This sequence belongs to the LeuD family. LeuD type 1 subfamily. As to quaternary structure, heterodimer of LeuC and LeuD.

It catalyses the reaction (2R,3S)-3-isopropylmalate = (2S)-2-isopropylmalate. It functions in the pathway amino-acid biosynthesis; L-leucine biosynthesis; L-leucine from 3-methyl-2-oxobutanoate: step 2/4. Catalyzes the isomerization between 2-isopropylmalate and 3-isopropylmalate, via the formation of 2-isopropylmaleate. The protein is 3-isopropylmalate dehydratase small subunit of Bacillus thuringiensis subsp. konkukian (strain 97-27).